The following is a 276-amino-acid chain: Bifunctional esterase/perhydrolase DCH (276 aa).

In terms of domain architecture, AB hydrolase-1 spans 23–254 (PVIFFHHGWP…NGKLISYPGF (232 aa)). Active-site residues include S97, D227, and H256.

This sequence belongs to the AB hydrolase superfamily. Bacterial non-heme haloperoxidase / perhydrolase family. Homodimer.

The enzyme catalyses 3,4-dihydrocoumarin + H2O = 3-(2-hydroxyphenyl)propanoate + H(+). It carries out the reaction peracetic acid + H2O = acetate + H2O2 + H(+). The catalysed reaction is a percarboxylic acid + H2O = a carboxylate + H2O2 + H(+). Its activity is regulated as follows. Inhibited by the serine protease inhibitors diisopropyl fluorophosphate and phenylmethanesulfonyl fluoride. Its function is as follows. Multifunctional enzyme, which shows esterase and perhydrolase activities, and is capable of organic acid-assisted bromination of organic compounds. Catalyzes the hydrolysis of 3,4-dihydrocoumarin. Aromatic lactones other than 3,4-dihydrocoumarin, such as 2-coumaranone and homogentisic acid lactone, are also substrates, but their activities relative to that of 3,4-dihydrocoumarin are quite low. Also catalyzes the hydrolysis of several linear esters, with specificity toward methyl esters. In addition, shows perhydrolase activity and catalyzes the dose- and time-dependent degradation of peracetic acid, a broad-spectrum biocide, to acetic acid and hydrogen peroxide. It suggests that in vivo DCH may play a role in the oxidative stress defense system and detoxify peroxoacids in conjunction with the catalase, i.e. peroxoacids are first hydrolyzed to the corresponding acids and hydrogen peroxide by DCH, and then the resulting hydrogen peroxide is degraded by the catalase. Also shows organic acid-assisted bromination activity toward monochlorodimedon when incubated with hydrogen peroxide and dihydrocoumarin or an organic acid, such as acetate and n-butyrate. The sequence is that of Bifunctional esterase/perhydrolase DCH from Acinetobacter calcoaceticus.